We begin with the raw amino-acid sequence, 461 residues long: tRNA-splicing endonuclease subunit Sen2 (461 aa).

Disordered stretches follow at residues 140 to 176 and 190 to 210; these read GAEQTGDSCDTVCPNTENTELSGQSSTDTGNIATSSP and GDPASDSMVGSKEQEPADVKE. Polar residues predominate over residues 144-176; sequence TGDSCDTVCPNTENTELSGQSSTDTGNIATSSP. Residues 201 to 210 are compositionally biased toward basic and acidic residues; sequence KEQEPADVKE. Active-site residues include tyrosine 365, histidine 373, and lysine 412.

Belongs to the tRNA-intron endonuclease family. As to quaternary structure, tRNA splicing endonuclease is a heterotetramer composed of SEN2, SEN15, SEN34/LENG5 and SEN54.

Its subcellular location is the nucleus. The enzyme catalyses pretRNA = a 3'-half-tRNA molecule with a 5'-OH end + a 5'-half-tRNA molecule with a 2',3'-cyclic phosphate end + an intron with a 2',3'-cyclic phosphate and a 5'-hydroxyl terminus.. Its function is as follows. Constitutes one of the two catalytic subunit of the tRNA-splicing endonuclease complex, a complex responsible for identification and cleavage of the splice sites in pre-tRNA. It cleaves pre-tRNA at the 5'- and 3'-splice sites to release the intron. The products are an intron and two tRNA half-molecules bearing 2',3'-cyclic phosphate and 5'-OH termini. There are no conserved sequences at the splice sites, but the intron is invariably located at the same site in the gene, placing the splice sites an invariant distance from the constant structural features of the tRNA body. Probably carries the active site for 5'-splice site cleavage. The tRNA splicing endonuclease is also involved in mRNA processing via its association with pre-mRNA 3'-end processing factors, establishing a link between pre-tRNA splicing and pre-mRNA 3'-end formation, suggesting that the endonuclease subunits function in multiple RNA-processing events. In Gallus gallus (Chicken), this protein is tRNA-splicing endonuclease subunit Sen2 (TSEN2).